A 227-amino-acid polypeptide reads, in one-letter code: Ribose-5-phosphate isomerase A (227 aa).

Residues 26 to 29 (TGST), 82 to 85 (DGAD), and 95 to 98 (KGGG) each bind substrate. Glutamate 104 acts as the Proton acceptor in catalysis. Substrate is bound at residue lysine 122.

It belongs to the ribose 5-phosphate isomerase family. As to quaternary structure, homodimer.

The enzyme catalyses aldehydo-D-ribose 5-phosphate = D-ribulose 5-phosphate. The protein operates within carbohydrate degradation; pentose phosphate pathway; D-ribose 5-phosphate from D-ribulose 5-phosphate (non-oxidative stage): step 1/1. Its function is as follows. Catalyzes the reversible conversion of ribose-5-phosphate to ribulose 5-phosphate. The protein is Ribose-5-phosphate isomerase A of Streptococcus pneumoniae (strain ATCC 700669 / Spain 23F-1).